Consider the following 430-residue polypeptide: 3-phosphoshikimate 1-carboxyvinyltransferase (430 aa).

Positions 25, 26, and 30 each coordinate 3-phosphoshikimate. Lysine 25 provides a ligand contact to phosphoenolpyruvate. Phosphoenolpyruvate contacts are provided by glycine 97 and arginine 125. 3-phosphoshikimate is bound by residues serine 170, glutamine 172, aspartate 318, and lysine 345. Glutamine 172 lines the phosphoenolpyruvate pocket. Aspartate 318 functions as the Proton acceptor in the catalytic mechanism. Phosphoenolpyruvate contacts are provided by arginine 349 and arginine 391.

The protein belongs to the EPSP synthase family. Monomer.

The protein localises to the cytoplasm. It carries out the reaction 3-phosphoshikimate + phosphoenolpyruvate = 5-O-(1-carboxyvinyl)-3-phosphoshikimate + phosphate. Its pathway is metabolic intermediate biosynthesis; chorismate biosynthesis; chorismate from D-erythrose 4-phosphate and phosphoenolpyruvate: step 6/7. In terms of biological role, catalyzes the transfer of the enolpyruvyl moiety of phosphoenolpyruvate (PEP) to the 5-hydroxyl of shikimate-3-phosphate (S3P) to produce enolpyruvyl shikimate-3-phosphate and inorganic phosphate. In Shouchella clausii (strain KSM-K16) (Alkalihalobacillus clausii), this protein is 3-phosphoshikimate 1-carboxyvinyltransferase.